A 133-amino-acid polypeptide reads, in one-letter code: Bacteriohemerythrin (133 aa).

His19, His56, Glu60, His75, His79, His115, and Asp120 together coordinate Fe cation.

The protein belongs to the hemerythrin family. As to quaternary structure, monomer.

Its function is as follows. Oxygen-binding protein. May be involved in a storage mechanism or for delivery to oxygen-requiring enzymes. The oxygen-binding site contains two iron atoms. The polypeptide is Bacteriohemerythrin (Campylobacter jejuni subsp. jejuni serotype O:6 (strain 81116 / NCTC 11828)).